A 202-amino-acid chain; its full sequence is Recombination protein RecR (202 aa).

A C4-type zinc finger spans residues 56 to 71 (CRVCGNLDSADPCSVC). Positions 79–179 (GLICVVESVG…SVTRLAQGIP (101 aa)) constitute a Toprim domain.

The protein belongs to the RecR family.

Functionally, may play a role in DNA repair. It seems to be involved in an RecBC-independent recombinational process of DNA repair. It may act with RecF and RecO. This Granulibacter bethesdensis (strain ATCC BAA-1260 / CGDNIH1) protein is Recombination protein RecR.